Consider the following 138-residue polypeptide: MLIPRKVAHRKQHHPGRTGAAKGGTRVTFGEYGIQALESAYVTNRQIESARIAMTRHIRRGGKVWINIYPDRPLTKKPAETRMGSGKGSPEWWVANVKPGRVLFELSGVAEPVAREAMRRAIHKLPMKCRFVVREGGA.

The span at 1–16 (MLIPRKVAHRKQHHPG) shows a compositional bias: basic residues. Residues 1 to 24 (MLIPRKVAHRKQHHPGRTGAAKGG) form a disordered region.

It belongs to the universal ribosomal protein uL16 family. In terms of assembly, part of the 50S ribosomal subunit.

Functionally, binds 23S rRNA and is also seen to make contacts with the A and possibly P site tRNAs. This chain is Large ribosomal subunit protein uL16, found in Frankia alni (strain DSM 45986 / CECT 9034 / ACN14a).